The following is a 254-amino-acid chain: Translation initiation factor 2 subunit alpha (254 aa).

Residues 10–81 form the S1 motif domain; it reads GDLVVVKITE…ERKNVDLSLK (72 aa).

The protein belongs to the eIF-2-alpha family. As to quaternary structure, heterotrimer composed of an alpha, a beta and a gamma chain.

Its function is as follows. eIF-2 functions in the early steps of protein synthesis by forming a ternary complex with GTP and initiator tRNA. This chain is Translation initiation factor 2 subunit alpha, found in Thermoplasma volcanium (strain ATCC 51530 / DSM 4299 / JCM 9571 / NBRC 15438 / GSS1).